Consider the following 1368-residue polypeptide: DNA-directed RNA polymerase subunit beta (1368 aa).

Belongs to the RNA polymerase beta chain family. As to quaternary structure, the RNAP catalytic core consists of 2 alpha, 1 beta, 1 beta' and 1 omega subunit. When a sigma factor is associated with the core the holoenzyme is formed, which can initiate transcription.

It catalyses the reaction RNA(n) + a ribonucleoside 5'-triphosphate = RNA(n+1) + diphosphate. Functionally, DNA-dependent RNA polymerase catalyzes the transcription of DNA into RNA using the four ribonucleoside triphosphates as substrates. The polypeptide is DNA-directed RNA polymerase subunit beta (Legionella pneumophila (strain Lens)).